The primary structure comprises 456 residues: uncharacterized protein (456 aa).

11 consecutive transmembrane segments (helical) span residues 12–32, 63–83, 86–106, 143–163, 179–199, 208–228, 237–257, 305–325, 348–368, 390–410, and 414–434; these read SFIW…YLTL, FAAL…VGVA, VQAG…LGMA, WLAK…IGTF, IPVL…ILGG, SVIV…IILL, ILLI…AVGL, FLDT…TGAW, IGAT…ILGW, LAYI…IWII, and VNGL…KVII.

Belongs to the alanine or glycine:cation symporter (AGCS) (TC 2.A.25) family.

It localises to the cell inner membrane. This is an uncharacterized protein from Haemophilus influenzae (strain ATCC 51907 / DSM 11121 / KW20 / Rd).